Reading from the N-terminus, the 1231-residue chain is MKVRLLRQLSAAAKAKAPSGLQGPPQAHHFVSLLLEEYAALCQAARSISTFLGTLENEHLKKFQVTWELHNKHLFENLVFSEPLLQSNLPALVSQIRLGTTTHDTCTEDMYSTLLQRYQRSEEELRKVAEEWLECQKRIDAYVDEQMTMKTKQRMLTEDWEIFKQRRLIEEQLTNKKVVTGENNFTDTRRHMLSSRLSMPDCPNCNYRRRCACDDCSLSHILTCGIMDTPVTDDIHIHQLPLQVDSAPDYLSEMRPPSVSSASSGSGSSSPITIQQHPRLILTDNGSAPTFCSDDEDVAPLSAKFADIYPLTNYDDTNVVANMNGIHSELNGGGENMALKDESPQVSSTSRSSSEADDEDADGESSGEPPGAPKQEEAIGNGNPKTEESNVNTPPPSYPAQQAEQTPNTCECHVCKQEASGLPASAMTAGALPPGHQFLSPEKPTHPALHLYPHIHGHVPLHTVPHLPRPLIHPTLYPAPPFTHSKALPPAPVQSHTNKPQAFNASLQDHIYPSCFGNTPDWNSSKFISLWESEMMNDKNWNPGTFLPDTISGNDILGPVLSETRPEALPPPPSNEAPAVSDIKEKKNAAKKKCLYNFQDAFMEANEVAMANTVAMATSSATSSVSCTATTVQSSSSQFKVSSRRPPSIGDVFHGLNKEDHRHSAPAAPRNSPTGLAPLPALSPSALSPASTPHLPNLAAPSFPKTATTAPGFVDTRKSFCPTPVAPPPSTTDGSISAPPSVCSDPDCEGHRCENGVYDPQQDDGDESADEDSCSEHSSSTSTSTNQKEGKYCDCCYCEFFGHGGPPAAPTSRNYAEMREKLRLRLTKRKEEQPKKMEQISEREGVVDHRRVEDLLQFINSSEAKPVSSSRAAKRARHKQRKLEEKARLEAEARAREHLHHQEEQKQREEEEDEEEEDEEQHFKEEFQRLQELQKLRAAKKKKKDRPSKDCSKLDMLARNFQAATESISNSENIHNGSLEQTEEPETSSHSPSRHMNHSEPRPGPGANGDATDPVDPRDPSKLLLPKEVNGKQHEPLAFLLDMMHHHKEGNSKQKLKQTSKTSNEPARKPTEPPKTTEVQLKPRAQPELKPKVVDLALLTEQKREERKTNSNNNNKKQLSHIKEEKLSTVTPEPPSPSQLLQNGRLILASSPQPKGKNKKNKKKKGDRTSSSLDDVFLPKDIDLDSVDMDETEREVEYFKRFCLDSARQNRQRLSINWSNFSLKKATFAAH.

A coiled-coil region spans residues 106–142 (CTEDMYSTLLQRYQRSEEELRKVAEEWLECQKRIDAY). The segment at 249 to 272 (DYLSEMRPPSVSSASSGSGSSSPI) is disordered. A compositionally biased stretch (low complexity) spans 258 to 270 (SVSSASSGSGSSS). Ser293 carries the phosphoserine modification. 5 disordered regions span residues 331 to 405 (NGGG…QAEQ), 633 to 703 (QSSS…APSF), 719 to 789 (SFCP…NQKE), 826 to 845 (LTKR…EREG), and 860 to 1174 (NSSE…SSLD). Residues 355 to 365 (EADDEDADGES) are compositionally biased toward acidic residues. Ser648 is modified (phosphoserine). Residues 676–691 (LAPLPALSPSALSPAS) are compositionally biased toward low complexity. Over residues 761-773 (QQDDGDESADEDS) the composition is skewed to acidic residues. Positions 776-785 (EHSSSTSTST) are enriched in low complexity. Over residues 872-881 (AAKRARHKQR) the composition is skewed to basic residues. The stretch at 877–973 (RHKQRKLEEK…ATESISNSEN (97 aa)) forms a coiled coil. The segment covering 882–909 (KLEEKARLEAEARAREHLHHQEEQKQRE) has biased composition (basic and acidic residues). Acidic residues predominate over residues 910–920 (EEEDEEEEDEE). Residues 921 to 935 (QHFKEEFQRLQELQK) are compositionally biased toward basic and acidic residues. Positions 937-946 (RAAKKKKKDR) are enriched in basic residues. Residues 962–979 (QAATESISNSENIHNGSL) are compositionally biased toward polar residues. Phosphoserine occurs at positions 1136 and 1151. Positions 1156-1166 (GKNKKNKKKKG) are enriched in basic residues.

This sequence belongs to the FAM193 family.

In Mus musculus (Mouse), this protein is Protein FAM193A (Fam193a).